A 389-amino-acid chain; its full sequence is 8-amino-7-oxononanoate synthase (389 aa).

A substrate-binding site is contributed by R19. Position 106 to 107 (106 to 107) interacts with pyridoxal 5'-phosphate; that stretch reads GY. Residue H131 coordinates substrate. Pyridoxal 5'-phosphate is bound by residues S178, 203-206, and 234-237; these read DDAH and TLSK. K237 carries the N6-(pyridoxal phosphate)lysine modification. T351 lines the substrate pocket.

It belongs to the class-II pyridoxal-phosphate-dependent aminotransferase family. BioF subfamily. As to quaternary structure, homodimer. Requires pyridoxal 5'-phosphate as cofactor.

It carries out the reaction 6-carboxyhexanoyl-[ACP] + L-alanine + H(+) = (8S)-8-amino-7-oxononanoate + holo-[ACP] + CO2. It participates in cofactor biosynthesis; biotin biosynthesis. In terms of biological role, catalyzes the decarboxylative condensation of pimeloyl-[acyl-carrier protein] and L-alanine to produce 8-amino-7-oxononanoate (AON), [acyl-carrier protein], and carbon dioxide. Can also use pimeloyl-CoA instead of pimeloyl-ACP as substrate. The protein is 8-amino-7-oxononanoate synthase (bioF) of Lysinibacillus sphaericus (Bacillus sphaericus).